We begin with the raw amino-acid sequence, 182 residues long: Ribulose bisphosphate carboxylase small subunit, chloroplastic 4 (182 aa).

A chloroplast-targeting transit peptide spans 1–41 (MAATMMNKTVVLSKGCTKPSAVPKVSINRKGFLNTAMNKKR).

It belongs to the RuBisCO small chain family. As to quaternary structure, heterohexadecamer of 8 large and 8 small subunits.

It localises to the plastid. The protein localises to the chloroplast. In terms of biological role, ruBisCO catalyzes two reactions: the carboxylation of D-ribulose 1,5-bisphosphate, the primary event in carbon dioxide fixation, as well as the oxidative fragmentation of the pentose substrate. Both reactions occur simultaneously and in competition at the same active site. Although the small subunit is not catalytic it is essential for maximal activity. This is Ribulose bisphosphate carboxylase small subunit, chloroplastic 4 from Acetabularia peniculus (Green alga).